We begin with the raw amino-acid sequence, 267 residues long: Hydroxyethylthiazole kinase (267 aa).

Met49 is a binding site for substrate. ATP is bound by residues Arg124 and Thr170. Gly197 contributes to the substrate binding site.

This sequence belongs to the Thz kinase family. It depends on Mg(2+) as a cofactor.

It catalyses the reaction 5-(2-hydroxyethyl)-4-methylthiazole + ATP = 4-methyl-5-(2-phosphooxyethyl)-thiazole + ADP + H(+). The protein operates within cofactor biosynthesis; thiamine diphosphate biosynthesis; 4-methyl-5-(2-phosphoethyl)-thiazole from 5-(2-hydroxyethyl)-4-methylthiazole: step 1/1. Functionally, catalyzes the phosphorylation of the hydroxyl group of 4-methyl-5-beta-hydroxyethylthiazole (THZ). The chain is Hydroxyethylthiazole kinase from Tolumonas auensis (strain DSM 9187 / NBRC 110442 / TA 4).